The chain runs to 440 residues: GTPase Obg (440 aa).

The Obg domain occupies S5–L163. The OBG-type G domain maps to A164 to S338. Residues G170 to S177, F195 to K199, D217 to G220, S288 to D291, and S319 to V321 contribute to the GTP site. The Mg(2+) site is built by S177 and T197. The OCT domain maps to Y362 to Q440.

This sequence belongs to the TRAFAC class OBG-HflX-like GTPase superfamily. OBG GTPase family. As to quaternary structure, monomer. Requires Mg(2+) as cofactor.

The protein localises to the cytoplasm. Its function is as follows. An essential GTPase which binds GTP, GDP and possibly (p)ppGpp with moderate affinity, with high nucleotide exchange rates and a fairly low GTP hydrolysis rate. Plays a role in control of the cell cycle, stress response, ribosome biogenesis and in those bacteria that undergo differentiation, in morphogenesis control. This is GTPase Obg from Lactobacillus delbrueckii subsp. bulgaricus (strain ATCC BAA-365 / Lb-18).